Reading from the N-terminus, the 95-residue chain is Ribonuclease kappa (95 aa).

2 consecutive transmembrane segments (helical) span residues 12–32 and 68–88; these read GLII…FFYI and CWIA…QFYM.

Belongs to the RNase K family.

The protein localises to the membrane. Its function is as follows. Endoribonuclease. In terms of biological role, (Microbial infection) Required for the initial stages of clathrin-mediated endocytic uptake of a diverse set of flaviviruses, including dengue and West Nile. Not required for clathrin-mediated endocytosis and macropinocytosis. This is Ribonuclease kappa from Drosophila melanogaster (Fruit fly).